Here is a 299-residue protein sequence, read N- to C-terminus: MTEFRSGFVCFVGRPNTGKSTLTNALVGQKVAITSNRPQTTRHTIRGIVHREDFQIILVDTPGLHRPRTLLGQRLNDLVKDTYSEVDVIGMCIPADEAIGPGDRWIYQQIRAVAPRTTLIGIVTKIDKVPKDRVAAQLLAVSELMGPDAEIVPVSATSGEQLDVLTNVLVSQLPPGPAYYPDGELTDEPEEVLMAELIREAALEGVRDELPHSLAVVIDEVSQREDRDDLIDVHAILYVERDSQKGIVIGKGGARLREVGTAARKQIEKLLGTKVYLDLRVKIAKNWQRDPKQLGKLGF.

The 171-residue stretch at 5–175 (RSGFVCFVGR…TNVLVSQLPP (171 aa)) folds into the Era-type G domain. A G1 region spans residues 13 to 20 (GRPNTGKS). 13–20 (GRPNTGKS) is a binding site for GTP. The interval 39 to 43 (QTTRH) is G2. Residues 60-63 (DTPG) are G3. Residues 60-64 (DTPGL) and 124-127 (TKID) each bind GTP. A G4 region spans residues 124–127 (TKID). The tract at residues 154-156 (VSA) is G5. Positions 206–285 (VRDELPHSLA…YLDLRVKIAK (80 aa)) constitute a KH type-2 domain.

The protein belongs to the TRAFAC class TrmE-Era-EngA-EngB-Septin-like GTPase superfamily. Era GTPase family. In terms of assembly, monomer. Stays in the monomer conformation, irrespective of the presence of GTP.

The protein localises to the cell envelope. Its subcellular location is the secreted. It localises to the cell wall. Co-purified with RNA upon overexpression in E.coli, but RNAs do not appear to influence the GTPase activity. Functionally, exhibits GTPase activity. Binds RNA but is probably not involved in ribosome assembly in mycobacteria. Cannot use ATP. This chain is GTPase Era, found in Mycolicibacterium smegmatis (strain ATCC 700084 / mc(2)155) (Mycobacterium smegmatis).